The primary structure comprises 2726 residues: Filamin-C (2726 aa).

The actin-binding stretch occupies residues 1–260 (MMNNSNYSDA…VMTYLSQFPK (260 aa)). At Ser5 the chain carries Phosphoserine. 2 consecutive Calponin-homology (CH) domains span residues 37 to 143 (KIQQ…LHYS) and 160 to 263 (QTPK…KAKL). 15 Filamin repeats span residues 271–369 (SKQL…EVNV), 371–469 (MALG…PVHV), 470–566 (AEAC…EVQV), 567–659 (SPEA…IAHI), 663–759 (PPDC…RVNV), 760–862 (GEGS…HIKV), 863–961 (DPSH…VVNV), 962–1057 (APPL…AVEG), 1058–1150 (VLPP…KATI), 1151–1245 (QPVF…RVHV), 1246–1345 (QPAV…RVGV), 1346–1438 (TEGC…RVPV), 1439–1534 (KDVV…KIKV), 1535–1631 (LPSH…RIHA), and 1636–1735 (DASK…HVLA). Arg1003 carries the post-translational modification Omega-N-methylarginine. Phosphoserine is present on residues Ser1162 and Ser1339. A hinge 1 region spans residues 1736 to 1759 (CDPLPHVEEPAEMLQMRQPYAPLR). 4 Filamin repeats span residues 1760–1855 (PGTC…QFYV), 1856–1947 (DAIN…TAKI), 1948–2034 (TGDD…KILV), and 2037–2129 (SEIG…TVKV). At Ser2043 the chain carries Phosphoserine. The interval 2163 to 2244 (GNWFQMVSAQ…FGSITRQQEG (82 aa)) is intradomain insert; mediate targeting to Z lines. Residues 2193 to 2210 (EISKTRGGETKREVRVEE) show a composition bias toward basic and acidic residues. The disordered stretch occupies residues 2193–2214 (EISKTRGGETKREVRVEESTQV). A Filamin 20; mediates interaction with XIRP1 repeat occupies 2212–2307 (TQVGGDPFPA…VPGSPFQFTV (96 aa)). Ser2234 and Ser2237 each carry phosphoserine. Thr2239 bears the Phosphothreonine mark. Residues 2241 to 2260 (QQEGEASSQDMTAQVTSPSG) show a composition bias toward polar residues. Residues 2241–2261 (QQEGEASSQDMTAQVTSPSGK) are disordered. 3 Filamin repeats span residues 2310–2402 (LGEG…VVPV), 2404–2497 (SLSD…KIRV), and 2501–2593 (SQAG…KAKV). Residues 2404–2725 (SLSDDARRLT…VPGSPFKVNV (322 aa)) form an interaction with INPPL1 region. Phosphoserine is present on residues Ser2587, Ser2618, Ser2621, Ser2633, Ser2715, and Ser2719. A hinge 2 region spans residues 2594–2630 (TGPRLSGGHSLHETSTVLVETVTKSSSSRGASYSSIP). The self-association site, tail stretch occupies residues 2594-2726 (TGPRLSGGHS…PGSPFKVNVP (133 aa)). The stretch at 2631 to 2725 (KFSSDASKVV…VPGSPFKVNV (95 aa)) is one Filamin 24 repeat.

This sequence belongs to the filamin family. As to quaternary structure, homodimer; the filamin repeat 24 and the second hinge domain are important for dimer formation. Interacts with FLNB, INPPL1, ITGB1A, KCND2, MYOT, MYOZ1 and MYOZ3. Interacts with sarcoglycans SGCD and SGCG. Interacts (via filament repeats 17-18, 20-21 and 24) with USP25 (isoform USP25m only). Interacts with FBLIM1. Interacts with XIRP1; this interaction is mediated by filamin 20 repeat. Interacts with KY. Interacts with IGFN1. Interacts with MICALL2. Interacts with ANK3. Interacts with MICALL2. Interacts with ANK3. Interacts with SYNPO2. Post-translationally, ubiquitinated by FBXL22, leading to proteasomal degradation.

Its subcellular location is the cytoplasm. The protein resides in the membrane. The protein localises to the cytoskeleton. It is found in the myofibril. It localises to the sarcomere. Its subcellular location is the z line. In terms of biological role, muscle-specific filamin, which plays a central role in sarcomere assembly and organization. Critical for normal myogenesis, it probably functions as a large actin-cross-linking protein with structural functions at the Z lines in muscle cells. May be involved in reorganizing the actin cytoskeleton in response to signaling events. This is Filamin-C (Flnc) from Mus musculus (Mouse).